The chain runs to 658 residues: Protein teflon (658 aa).

The C2H2-type 1 zinc finger occupies 33–56 (LYCHFCRDLFTQLPEFLRHLQSNH). The disordered stretch occupies residues 80–131 (DKAHEDAQSAGHNSSSGDSRSLMNSEDSRAIDGSEENSDNSPVKPEQIGKQN). The span at 89 to 104 (AGHNSSSGDSRSLMNS) shows a compositional bias: polar residues. C2H2-type zinc fingers lie at residues 608–630 (YFCK…LISH) and 634–657 (FQCT…RNAH).

The protein belongs to the Teflon family.

The protein resides in the nucleus. The protein localises to the chromosome. Its function is as follows. Specifically required in males for proper segregation of autosomal bivalents at meiosis I. Expression is required in the male germ line prior to spermatocyte stage S4. May have a role as a bridging molecule maintaining adhesion to hold autosome bivalents together via heterochromatic connections. This is Protein teflon from Drosophila simulans (Fruit fly).